The following is a 680-amino-acid chain: DNA-directed RNA polymerase subunit beta' (680 aa).

The Zn(2+) site is built by Cys69, Cys71, Cys87, and Cys90. Residues Asp489, Asp491, and Asp493 each contribute to the Mg(2+) site.

It belongs to the RNA polymerase beta' chain family. RpoC1 subfamily. In plastids the minimal PEP RNA polymerase catalytic core is composed of four subunits: alpha, beta, beta', and beta''. When a (nuclear-encoded) sigma factor is associated with the core the holoenzyme is formed, which can initiate transcription. Mg(2+) is required as a cofactor. Zn(2+) serves as cofactor.

The protein localises to the plastid. It is found in the chloroplast. The catalysed reaction is RNA(n) + a ribonucleoside 5'-triphosphate = RNA(n+1) + diphosphate. Its function is as follows. DNA-dependent RNA polymerase catalyzes the transcription of DNA into RNA using the four ribonucleoside triphosphates as substrates. The sequence is that of DNA-directed RNA polymerase subunit beta' from Nasturtium officinale (Watercress).